The primary structure comprises 62 residues: Large ribosomal subunit protein bL28 (62 aa).

Residues 1-24 (MARKCVITGRKTKAGNNRSHAMNS) form a disordered region. The segment covering 14–24 (AGNNRSHAMNS) has biased composition (polar residues).

Belongs to the bacterial ribosomal protein bL28 family.

This chain is Large ribosomal subunit protein bL28, found in Bacillus pumilus (strain SAFR-032).